The primary structure comprises 91 residues: Transcription factor ILI3 (91 aa).

The bHLH domain occupies 3 to 58 (SRRGGGGGGGRITDEEINELISKLQALLPESSRSRGASRSSASKLLKETCSYIKSL).

This sequence belongs to the bHLH protein family.

Functionally, atypical and probable non DNA-binding bHLH transcription that integrates multiple signaling pathways to regulate cell elongation and plant development. In Oryza sativa subsp. indica (Rice), this protein is Transcription factor ILI3 (ILI3).